The primary structure comprises 385 residues: Mannitol-1-phosphate 5-dehydrogenase (385 aa).

Ala-3–Gly-14 provides a ligand contact to NAD(+).

This sequence belongs to the mannitol dehydrogenase family.

It carries out the reaction D-mannitol 1-phosphate + NAD(+) = beta-D-fructose 6-phosphate + NADH + H(+). This is Mannitol-1-phosphate 5-dehydrogenase from Pasteurella multocida (strain Pm70).